Here is a 344-residue protein sequence, read N- to C-terminus: MIKVGIIGYGTIGKRIADAVAMQDDMKVVGVLKVTPDYEAKIALARGFPIYTYSDRFDKFKKAGIEPAGTIEDLIKASDIIIDASPEDVGRENKEKYYQRYDKPVIFQGGEEADVADVSFNALANYEEAKGRRYVRVVSCNTTGITRVLTSLILNGIGIKKARIFIARRGADPKEHKKGPINDVVPNPATVPSHHGPDVQTILKDIDIVTMAIAVPVTIMHMHMAYIELSSTYTKDAVIEAFVKTPRIFLADVGSGFQSLAHVIEYARDLGRSRSDFPEVAIFRDSVTIRGNELYLMYGVHQESIVVPENVDAIRAVLGILPKWRSIEKTDKTLKLITEGKVYG.

NAD(+) is bound by residues 11 to 12 (TI) and Gly110. 139 to 141 (SCN) lines the D-glyceraldehyde 3-phosphate pocket. Cys140 functions as the Nucleophile in the catalytic mechanism. Arg169 is a binding site for NAD(+). Position 195-196 (195-196 (HG)) interacts with D-glyceraldehyde 3-phosphate. Gln302 provides a ligand contact to NAD(+).

The protein belongs to the glyceraldehyde-3-phosphate dehydrogenase family. Homotetramer.

Its subcellular location is the cytoplasm. It catalyses the reaction D-glyceraldehyde 3-phosphate + phosphate + NADP(+) = (2R)-3-phospho-glyceroyl phosphate + NADPH + H(+). The enzyme catalyses D-glyceraldehyde 3-phosphate + phosphate + NAD(+) = (2R)-3-phospho-glyceroyl phosphate + NADH + H(+). It participates in carbohydrate degradation; glycolysis; pyruvate from D-glyceraldehyde 3-phosphate: step 1/5. In Pyrobaculum islandicum (strain DSM 4184 / JCM 9189 / GEO3), this protein is Glyceraldehyde-3-phosphate dehydrogenase.